The primary structure comprises 168 residues: Cell division inhibitor SulA (168 aa).

A ftsZ binding region spans residues 105-111 (ALLTGNY). A lon protease binding region spans residues 161 to 168 (KIHSTLYH).

The protein belongs to the SulA family. In terms of assembly, interacts with FtsZ. Post-translationally, is rapidly cleaved and degraded by the Lon protease once DNA damage is repaired.

In terms of biological role, component of the SOS system and an inhibitor of cell division. Accumulation of SulA causes rapid cessation of cell division and the appearance of long, non-septate filaments. In the presence of GTP, binds a polymerization-competent form of FtsZ in a 1:1 ratio, thus inhibiting FtsZ polymerization and therefore preventing it from participating in the assembly of the Z ring. This mechanism prevents the premature segregation of damaged DNA to daughter cells during cell division. This is Cell division inhibitor SulA from Pectobacterium carotovorum subsp. carotovorum (strain PC1).